The primary structure comprises 498 residues: E3 ubiquitin-protein ligase TRIM22 (498 aa).

The segment at 15-60 (CPICLELLTEPLSLDCGHSFCQACITAKIKESVIISRGESSCPVCQ) adopts an RING-type zinc-finger fold. The segment at 92-133 (QKRDVCEHHGKKLQIFCKEDGKVICWVCELSQEHQGHQTFRI) adopts a B box-type zinc-finger fold. Residues C97, H100, C119, and H125 each contribute to the Zn(2+) site. A coiled-coil region spans residues 132-248 (RINEVVKECQ…RRLRGSSVEM (117 aa)). The short motif at 257–275 (KRSESWTLKKPKSVSKKLK) is the Nuclear localization signal element. The B30.2/SPRY domain occupies 283–498 (LSGMLQVLKE…VPMTVCPPSS (216 aa)).

Belongs to the TRIM/RBCC family. As to quaternary structure, homotrimer. (Microbial infection) Interacts with HIV-1 Gag polyprotein; this interaction seems to reduce gag production or virus budding. In terms of assembly, (Microbial infection) Interacts with EMCV protease 3C; this interaction leads to viral protease ubiquitination. In terms of processing, auto-ubiquitinated. Strongly expressed in peripheral blood leukocytes, spleen, thymus, and ovary. Expressed at basal levels in other tissues.

The protein resides in the cytoplasm. It is found in the nucleus. It localises to the nucleus speckle. The protein localises to the cajal body. The catalysed reaction is S-ubiquitinyl-[E2 ubiquitin-conjugating enzyme]-L-cysteine + [acceptor protein]-L-lysine = [E2 ubiquitin-conjugating enzyme]-L-cysteine + N(6)-ubiquitinyl-[acceptor protein]-L-lysine.. Its pathway is protein modification; protein ubiquitination. In terms of biological role, interferon-induced E3 ubiquitin ligase that plays important roles in innate and adaptive immunity. Restricts the replication of many viruses including HIV-1, encephalomyocarditis virus (EMCV), hepatitis B virus (HBV), hepatitis C virus (HCV) or Zika virus (ZIKV). Mechanistically, negatively regulates HCV replication by promoting ubiquitination and subsequent degradation of viral NS5A. Also acts by promoting the degradation of Zika virus NS1 and NS3 proteins through proteasomal degradation. Acts as a suppressor of basal HIV-1 LTR-driven transcription by preventing Sp1 binding to the HIV-1 promoter. Also plays a role in antiviral immunity by co-regulating together with NT5C2 the RIGI/NF-kappa-B pathway by promoting 'Lys-63'-linked ubiquitination of RIGI, while NT5C2 is responsible for 'Lys-48'-linked ubiquitination of RIGI. Participates in adaptive immunity by suppressing the amount of MHC class II protein in a negative feedback manner in order to limit the extent of MHC class II induction. The sequence is that of E3 ubiquitin-protein ligase TRIM22 (TRIM22) from Homo sapiens (Human).